A 1265-amino-acid chain; its full sequence is 5-oxoprolinase (1265 aa).

Belongs to the oxoprolinase family. As to quaternary structure, homodimer.

It is found in the cytoplasm. Its subcellular location is the cytosol. It catalyses the reaction 5-oxo-L-proline + ATP + 2 H2O = L-glutamate + ADP + phosphate + H(+). In terms of biological role, catalyzes the cleavage of 5-oxo-L-proline to form L-glutamate coupled to the hydrolysis of ATP to ADP and inorganic phosphate. The protein is 5-oxoprolinase (oplah) of Dictyostelium discoideum (Social amoeba).